Reading from the N-terminus, the 330-residue chain is Glycerol-3-phosphate dehydrogenase [NAD(P)+] (330 aa).

Residues serine 10, tryptophan 11, arginine 31, and lysine 105 each coordinate NADPH. Residues lysine 105, glycine 135, and serine 137 each coordinate sn-glycerol 3-phosphate. Alanine 139 contributes to the NADPH binding site. The sn-glycerol 3-phosphate site is built by lysine 190, aspartate 243, serine 253, arginine 254, and asparagine 255. Lysine 190 functions as the Proton acceptor in the catalytic mechanism. An NADPH-binding site is contributed by arginine 254. Residues valine 278 and glutamate 280 each coordinate NADPH.

The protein belongs to the NAD-dependent glycerol-3-phosphate dehydrogenase family.

The protein resides in the cytoplasm. The enzyme catalyses sn-glycerol 3-phosphate + NAD(+) = dihydroxyacetone phosphate + NADH + H(+). It carries out the reaction sn-glycerol 3-phosphate + NADP(+) = dihydroxyacetone phosphate + NADPH + H(+). It functions in the pathway membrane lipid metabolism; glycerophospholipid metabolism. In terms of biological role, catalyzes the reduction of the glycolytic intermediate dihydroxyacetone phosphate (DHAP) to sn-glycerol 3-phosphate (G3P), the key precursor for phospholipid synthesis. The chain is Glycerol-3-phosphate dehydrogenase [NAD(P)+] from Nitratidesulfovibrio vulgaris (strain ATCC 29579 / DSM 644 / CCUG 34227 / NCIMB 8303 / VKM B-1760 / Hildenborough) (Desulfovibrio vulgaris).